The following is a 340-amino-acid chain: Cytosolic Fe-S cluster assembly factor NBP35 (340 aa).

Residues Met-1 to Asp-41 are disordered. A compositionally biased stretch (basic and acidic residues) spans Lys-11–Pro-30. 4 residues coordinate [4Fe-4S] cluster: Cys-29, Cys-43, Cys-46, and Cys-52. Gly-82–Ser-89 contributes to the ATP binding site. Cys-255 and Cys-258 together coordinate [4Fe-4S] cluster.

The protein belongs to the Mrp/NBP35 ATP-binding proteins family. NUBP1/NBP35 subfamily. Heterotetramer of 2 NBP35 and 2 CFD1 chains. [4Fe-4S] cluster serves as cofactor.

The protein resides in the cytoplasm. It localises to the nucleus. Component of the cytosolic iron-sulfur (Fe/S) protein assembly (CIA) machinery. Required for maturation of extramitochondrial Fe-S proteins. The NBP35-CFD1 heterotetramer forms a Fe-S scaffold complex, mediating the de novo assembly of an Fe-S cluster and its transfer to target apoproteins. Required for biogenesis and export of both ribosomal subunits, which may reflect a role in assembly of the Fe/S clusters in RLI1, a protein which performs rRNA processing and ribosome export. This Yarrowia lipolytica (strain CLIB 122 / E 150) (Yeast) protein is Cytosolic Fe-S cluster assembly factor NBP35.